Consider the following 376-residue polypeptide: tRNA-aminoacylation cofactor ARC1 (376 aa).

Residues 22 to 46 (KEQSAQAAQWESVLKSGQIQPHLDQ) are interaction with methionyl-tRNA synthetase MES1. Interaction with glutamyl-tRNA synthetase GUS1 regions lie at residues 52-61 (RDNTFIVSTL) and 91-121 (TYTT…EINH). The disordered stretch occupies residues 133 to 206 (KKKAPAGGAA…QNKAPEKPKP (74 aa)). A compositionally biased stretch (basic and acidic residues) spans 146 to 180 (AKADEDVSKKAKKQDHPRGKPDEETLKKLREEAKA). Low complexity predominate over residues 186-199 (KAANAKQQQEQQNK). The 103-residue stretch at 205–307 (KPSAIDFRVG…KDSKAGDKVF (103 aa)) folds into the tRNA-binding domain.

Belongs to the tRNA-aminoacylation cofactor ARC1 family. Component of a yeast aminoacyl-tRNA synthase (aaRS) complex formed by methionyl-tRNA synthase MES1, glutamyl-tRNA synthase GUS1 and the tRNA aminoacylation cofactor ARC1 in a stoichiometric complex. Interacts (via N-ter) with MES1 (via N-ter) and GUS1 (via N-ter). Can also form a stable binary complex with either MES1 or GUS1 that is functional in terms of aminoacylation.

The protein localises to the cytoplasm. Its function is as follows. Binds to tRNA and functions as a cofactor for the methionyl-tRNA synthetase (MetRS) and glutamyl-tRNA synthetase (GluRS). Forms a complex with MetRS and GluRS and increases their affinity for cognate tRNAs due to the presence of a tRNA binding domain in its middle and C-terminal part. Binds specifically G4 quadruplex nucleic acid structures (these are four-stranded right-handed helices, stabilized by guanine base quartets). Also required for cytoplasmic confinement of the synthetases and tRNA. The protein is tRNA-aminoacylation cofactor ARC1 (ARC1) of Saccharomyces cerevisiae (strain ATCC 204508 / S288c) (Baker's yeast).